A 2532-amino-acid polypeptide reads, in one-letter code: Lovastatin diketide synthase lovF (2532 aa).

Residues 10–430 (PAPIAMVGMG…GANAHAIVEQ (421 aa)) form the Ketosynthase family 3 (KS3) domain. Residues C183, H318, and H353 each act as for beta-ketoacyl synthase activity in the active site. The malonyl-CoA:ACP transacylase (MAT) domain stretch occupies residues 545–870 (VFTGQGAQWF…PYLSCLSRGK (326 aa)). S635 acts as the For malonyltransferase activity in catalysis. The segment at 941 to 1078 (HDLIGLQEPL…GLVRAEMDQP (138 aa)) is N-terminal hotdog fold. The segment at 941 to 1246 (HDLIGLQEPL…LEGLVFQSLG (306 aa)) is dehydratase (DH) domain. Residues 941–1251 (HDLIGLQEPL…FQSLGASLGT (311 aa)) enclose the PKS/mFAS DH domain. H973 acts as the Proton acceptor; for dehydratase activity in catalysis. A disordered region spans residues 1075–1094 (MDQPPSSLSNQQRIDPRPWS). A compositionally biased stretch (polar residues) spans 1078–1087 (PPSSLSNQQR). Residues 1092–1251 (PWSRKTAPQE…FQSLGASLGT (160 aa)) form a C-terminal hotdog fold region. D1159 functions as the Proton donor; for dehydratase activity in the catalytic mechanism. Residues 1423-1607 (ELVRLCCHKN…ARDCDSHEFY (185 aa)) form a methyltransferase (CMet) domain region. Positions 1825-2144 (GLLDSLHFTK…SGQHVGKIVV (320 aa)) are enoylreductase (ER) domain. The interval 2168–2340 (SYLVAGGLGG…AVTIDLGMVQ (173 aa)) is ketoreductase (KR) domain. The Carrier domain occupies 2453–2530 (ESIAVIMEAM…KVAEVVLQRY (78 aa)). S2490 is subject to O-(pantetheine 4'-phosphoryl)serine.

Interacts with LovD. Pantetheine 4'-phosphate is required as a cofactor.

It catalyses the reaction holo-[2-methylbutanoate polyketide synthase] + 2 malonyl-CoA + S-adenosyl-L-methionine + 2 NADPH + 3 H(+) = (S)-2-methylbutanoyl-[2-methylbutanoate polyketide synthase] + S-adenosyl-L-homocysteine + 2 CO2 + 2 NADP(+) + 2 CoA + H2O. It functions in the pathway polyketide biosynthesis; lovastatin biosynthesis. Its function is as follows. Lovastatin diketide synthase; part of the gene cluster that mediates the biosynthesis of lovastatin (also known as mevinolin, mevacor or monacolin K), a hypolipidemic inhibitor of (3S)-hydroxymethylglutaryl-coenzyme A (HMG-CoA) reductase (HMGR). The first step in the biosynthesis of lovastatin is the production of dihydromonacolin L acid by the lovastatin nonaketide synthase lovB and the trans-acting enoyl reductase lovC via condensation of one acetyl-CoA unit and 8 malonyl-CoA units. Dihydromonacolin L acid is released from lovB by the thioesterase lovG. Next, dihydromonacolin L acid is oxidized by the dihydromonacolin L monooxygenase lovA twice to form monacolin J acid. The 2-methylbutyrate moiety of lovastatin is synthesized by the lovastatin diketide synthase lovF via condensation of one acetyl-CoA unit and one malonyl-CoA unit. Finally, the covalent attachment of this moiety to monacolin J acid is catalyzed by the transesterase lovD to yield lovastatin. LovD has broad substrate specificity and can also convert monacolin J to simvastatin using alpha-dimethylbutanoyl-S-methyl-3-mercaptopropionate (DMB-S-MMP) as the thioester acyl donor, and can also catalyze the reverse reaction and function as hydrolase in vitro. LovD has much higher activity with LovF-bound 2-methylbutanoate than with free diketide substrates. This is Lovastatin diketide synthase lovF from Aspergillus terreus.